A 250-amino-acid chain; its full sequence is Hydroxyacylglutathione hydrolase (250 aa).

Zn(2+)-binding residues include His52, His54, Asp56, His57, His107, Asp128, and His166.

This sequence belongs to the metallo-beta-lactamase superfamily. Glyoxalase II family. In terms of assembly, monomer. The cofactor is Zn(2+).

It catalyses the reaction an S-(2-hydroxyacyl)glutathione + H2O = a 2-hydroxy carboxylate + glutathione + H(+). It participates in secondary metabolite metabolism; methylglyoxal degradation; (R)-lactate from methylglyoxal: step 2/2. Functionally, thiolesterase that catalyzes the hydrolysis of S-D-lactoyl-glutathione to form glutathione and D-lactic acid. This Neisseria gonorrhoeae (strain ATCC 700825 / FA 1090) protein is Hydroxyacylglutathione hydrolase.